A 152-amino-acid polypeptide reads, in one-letter code: Large ribosomal subunit protein bL9 (152 aa).

This sequence belongs to the bacterial ribosomal protein bL9 family.

Binds to the 23S rRNA. The sequence is that of Large ribosomal subunit protein bL9 from Chlorobaculum tepidum (strain ATCC 49652 / DSM 12025 / NBRC 103806 / TLS) (Chlorobium tepidum).